A 510-amino-acid polypeptide reads, in one-letter code: MIWHVQNENFILDSTRIFMKAFHLLLFDGSLIFPECILIFGLILLLMIDSTSDQKDIPWLYFISSTSLVMSITALLFRWREEPMISFSGNFQTNNFNEIFQFLILLCSTLCIPLSVEYIECTEMAITEFLLFVLTATLGGMFLCGANDLITIFVAPECFSLCSYLLSGYTKKDVRSNEATMKYLLMGGASSSILVHGFSWLYGSSGGEIELQEIVNGLINTQMYNSPGISIALIFITVGIGFKLSPAPSHQWTPDVYEGSPTPVVAFLSVTSKVAASASATRIFNIPFYFSSNEWHLLLEILAILSMILGNLIAITQTSMKRMLAYSSIGQIGYVIIGIIVGDSNDGYASMITYMLFYISMNLGTFACIVLFGLRTGTDNIRDYAGLYTKDPFLALSLALCLLSLGGLPPLAGFFGKLYLFWCGWQAGLYFLVLIGLLTSVVSIYYYLKIIKLLMTGRNQEITPHVRNYRRSPLRSNNSIELSMIVCVIASTIPGISMNPIIAIAQDSLF.

Helical transmembrane passes span L24–L44, I57–F77, I99–I119, M124–C144, L149–Y169, Y183–G203, P227–A247, W295–I315, M323–D343, Y354–L374, A395–F415, L418–L438, and M484–I504.

This sequence belongs to the complex I subunit 2 family. In terms of assembly, NDH is composed of at least 16 different subunits, 5 of which are encoded in the nucleus.

It localises to the plastid. The protein resides in the chloroplast thylakoid membrane. It carries out the reaction a plastoquinone + NADH + (n+1) H(+)(in) = a plastoquinol + NAD(+) + n H(+)(out). The enzyme catalyses a plastoquinone + NADPH + (n+1) H(+)(in) = a plastoquinol + NADP(+) + n H(+)(out). NDH shuttles electrons from NAD(P)H:plastoquinone, via FMN and iron-sulfur (Fe-S) centers, to quinones in the photosynthetic chain and possibly in a chloroplast respiratory chain. The immediate electron acceptor for the enzyme in this species is believed to be plastoquinone. Couples the redox reaction to proton translocation, and thus conserves the redox energy in a proton gradient. The polypeptide is NAD(P)H-quinone oxidoreductase subunit 2 A, chloroplastic (Solanum lycopersicum (Tomato)).